Consider the following 167-residue polypeptide: MNIRQQLTKFLGLFLTLASAFMFWKGLSVVTNSHSPIVVVLSGSMEPAFQRGDILFLWNRERFNKVGDVIVYEVDAKSIPIVHRVVREHRDKNGRQLLLTKGDNNAADDIALYGRKQSYLRRDKDIVGTVKGYLPKLGYVTILVSENQYAKFALMGMLALSSLLGSE.

The Cytoplasmic segment spans residues 1–6 (MNIRQQ). Residues 7–24 (LTKFLGLFLTLASAFMFW) form a helical; Signal-anchor for type II membrane protein membrane-spanning segment. Over 25-167 (KGLSVVTNSH…LALSSLLGSE (143 aa)) the chain is Lumenal. Catalysis depends on charge relay system residues S44, H83, and D109. Residues 153–164 (ALMGMLALSSLL) are C-terminal short (CTS) helix.

This sequence belongs to the peptidase S26B family. Component of the signal peptidase complex (SPC) composed of a catalytic subunit SEC11 and three accessory subunits SPC1, SPC2 and SPC3. The complex induces a local thinning of the ER membrane which is used to measure the length of the signal peptide (SP) h-region of protein substrates. This ensures the selectivity of the complex towards h-regions shorter than 18-20 amino acids. SPC associates with the translocon complex.

It localises to the endoplasmic reticulum membrane. It catalyses the reaction Cleavage of hydrophobic, N-terminal signal or leader sequences from secreted and periplasmic proteins.. In terms of biological role, catalytic component of the signal peptidase complex (SPC) which catalyzes the cleavage of N-terminal signal sequences from nascent proteins as they are translocated into the lumen of the endoplasmic reticulum. Specifically cleaves N-terminal signal peptides that contain a hydrophobic alpha-helix (h-region) shorter than 18-20 amino acids. The protein is Signal peptidase complex catalytic subunit SEC11 (SEC11) of Eremothecium gossypii (strain ATCC 10895 / CBS 109.51 / FGSC 9923 / NRRL Y-1056) (Yeast).